Here is a 207-residue protein sequence, read N- to C-terminus: dTTP/UTP pyrophosphatase (207 aa).

Aspartate 87 functions as the Proton acceptor in the catalytic mechanism.

This sequence belongs to the Maf family. YhdE subfamily. A divalent metal cation is required as a cofactor.

It localises to the cytoplasm. The catalysed reaction is dTTP + H2O = dTMP + diphosphate + H(+). It catalyses the reaction UTP + H2O = UMP + diphosphate + H(+). Its function is as follows. Nucleoside triphosphate pyrophosphatase that hydrolyzes dTTP and UTP. May have a dual role in cell division arrest and in preventing the incorporation of modified nucleotides into cellular nucleic acids. The polypeptide is dTTP/UTP pyrophosphatase (Ralstonia nicotianae (strain ATCC BAA-1114 / GMI1000) (Ralstonia solanacearum)).